Here is a 214-residue protein sequence, read N- to C-terminus: Thioredoxin-like 4, chloroplastic (214 aa).

Low complexity predominate over residues 1–20 (MITASLLPLPATSSSSGRRS). The disordered stretch occupies residues 1-68 (MITASLLPLP…STNGSLPGLP (68 aa)). A chloroplast-targeting transit peptide spans 1–71 (MITASLLPLP…GSLPGLPPVV (71 aa)). Over residues 21 to 34 (LPPPTTTFPRPPPP) the composition is skewed to pro residues. Residues 42–53 (SSSSSSASSTES) show a composition bias toward low complexity. Positions 72–199 (VEEEEEEFCP…IIAAIQKYTA (128 aa)) constitute a Thioredoxin domain. Residues cysteine 117 and cysteine 120 each act as nucleophile in the active site. Cysteine 117 and cysteine 120 are oxidised to a cystine.

The protein belongs to the thioredoxin family.

The protein resides in the plastid. It localises to the chloroplast. Probable thiol-disulfide oxidoreductase that may participate in various redox reactions. The chain is Thioredoxin-like 4, chloroplastic from Oryza sativa subsp. japonica (Rice).